The chain runs to 472 residues: Probable endopolygalacturonase D (472 aa).

Positions 1 to 16 (MKRGALLVPFVPLALA) are cleaved as a signal peptide. N-linked (GlcNAc...) asparagine glycosylation is present at Asn-24. Residues Cys-129 and Cys-144 are joined by a disulfide bond. PbH1 repeat units follow at residues 236–258 (MYYS…DIEH), 259–297 (TENL…DIKS), and 298–319 (STNL…AVSS). The N-linked (GlcNAc...) asparagine glycan is linked to Asn-300. The Proton donor role is filled by Asp-312. A disulfide bridge connects residues Cys-314 and Cys-330. His-334 is an active-site residue. PbH1 repeat units lie at residues 349–370 (VDGV…RIKS), 378–400 (VSNI…DIQQ), 412–433 (TNGV…SDGK), and 444–467 (CSNF…YPTD). Residues Asn-361, Asn-385, and Asn-419 are each glycosylated (N-linked (GlcNAc...) asparagine). Disulfide bonds link Cys-439–Cys-444 and Cys-462–Cys-469.

It belongs to the glycosyl hydrolase 28 family.

It localises to the secreted. It carries out the reaction (1,4-alpha-D-galacturonosyl)n+m + H2O = (1,4-alpha-D-galacturonosyl)n + (1,4-alpha-D-galacturonosyl)m.. In terms of biological role, involved in maceration and soft-rotting of plant tissue. Hydrolyzes the 1,4-alpha glycosidic bonds of de-esterified pectate in the smooth region of the plant cell wall. This is Probable endopolygalacturonase D (pgaD) from Neosartorya fischeri (strain ATCC 1020 / DSM 3700 / CBS 544.65 / FGSC A1164 / JCM 1740 / NRRL 181 / WB 181) (Aspergillus fischerianus).